The following is a 549-amino-acid chain: Glucose-6-phosphate isomerase (549 aa).

Glu353 (proton donor) is an active-site residue. Active-site residues include His384 and Lys513.

This sequence belongs to the GPI family.

The protein resides in the cytoplasm. The enzyme catalyses alpha-D-glucose 6-phosphate = beta-D-fructose 6-phosphate. It functions in the pathway carbohydrate biosynthesis; gluconeogenesis. Its pathway is carbohydrate degradation; glycolysis; D-glyceraldehyde 3-phosphate and glycerone phosphate from D-glucose: step 2/4. In terms of biological role, catalyzes the reversible isomerization of glucose-6-phosphate to fructose-6-phosphate. The sequence is that of Glucose-6-phosphate isomerase from Brucella canis (strain ATCC 23365 / NCTC 10854 / RM-666).